A 394-amino-acid chain; its full sequence is L-lactate dehydrogenase (394 aa).

The region spanning 1 to 380 is the FMN hydroxy acid dehydrogenase domain; that stretch reads MIISAASDYR…SRDSLVQNAE (380 aa). Position 24 (Y24) interacts with substrate. The FMN site is built by S106 and Q127. Y129 lines the substrate pocket. Residue T155 coordinates FMN. Substrate is bound at residue R164. Residue K251 participates in FMN binding. The active-site Proton acceptor is H275. Residue R278 coordinates substrate. 306-330 is a binding site for FMN; sequence DSGIRNGLDVVRMIALGADSVLLGR.

It belongs to the FMN-dependent alpha-hydroxy acid dehydrogenase family. FMN serves as cofactor.

It localises to the cell inner membrane. It carries out the reaction (S)-lactate + A = pyruvate + AH2. In terms of biological role, catalyzes the conversion of L-lactate to pyruvate. Is coupled to the respiratory chain. This chain is L-lactate dehydrogenase, found in Klebsiella pneumoniae (strain 342).